Consider the following 236-residue polypeptide: UPF0257 lipoprotein YnfC (236 aa).

Positions Met1–Gly16 are cleaved as a signal peptide. Residue Cys17 is the site of N-palmitoyl cysteine attachment. Cys17 is lipidated: S-diacylglycerol cysteine.

It belongs to the UPF0257 family.

It is found in the cell membrane. This chain is UPF0257 lipoprotein YnfC (ynfC), found in Shigella flexneri.